The following is a 90-amino-acid chain: Probable Fe(2+)-trafficking protein (90 aa).

It belongs to the Fe(2+)-trafficking protein family.

Its function is as follows. Could be a mediator in iron transactions between iron acquisition and iron-requiring processes, such as synthesis and/or repair of Fe-S clusters in biosynthetic enzymes. The protein is Probable Fe(2+)-trafficking protein of Haemophilus influenzae (strain 86-028NP).